We begin with the raw amino-acid sequence, 451 residues long: uncharacterized protein (451 aa).

The region spanning 2–60 is the TRAM domain; sequence VVKVKQKIPLKIKRMGINGEGIGFYQKTLVFVPGALKGENIFCQITAVKRNFAEAKLLT. Residues cysteine 73, cysteine 79, cysteine 82, and cysteine 162 each contribute to the [4Fe-4S] cluster site. The S-adenosyl-L-methionine site is built by glutamine 283, tyrosine 312, aspartate 333, and aspartate 381. Cysteine 408 functions as the Nucleophile in the catalytic mechanism.

The protein belongs to the class I-like SAM-binding methyltransferase superfamily. RNA M5U methyltransferase family.

This is an uncharacterized protein from Streptococcus pyogenes serotype M3 (strain ATCC BAA-595 / MGAS315).